We begin with the raw amino-acid sequence, 115 residues long: Probable malate:quinone oxidoreductase (115 aa).

Residues 88–115 (QMPAAAPTATAKPAETPREASPQHDMAL) form a disordered region. A compositionally biased stretch (low complexity) spans 90–101 (PAAAPTATAKPA). The span at 102–115 (ETPREASPQHDMAL) shows a compositional bias: basic and acidic residues.

The protein belongs to the MQO family. Requires FAD as cofactor.

The catalysed reaction is (S)-malate + a quinone = a quinol + oxaloacetate. The protein operates within carbohydrate metabolism; tricarboxylic acid cycle; oxaloacetate from (S)-malate (quinone route): step 1/1. In Klebsiella pneumoniae, this protein is Probable malate:quinone oxidoreductase (mqo).